A 414-amino-acid chain; its full sequence is Snake venom metalloproteinase atrolysin-B (414 aa).

An N-terminal signal peptide occupies residues 1 to 20; the sequence is MIEVLLVTICLAVFPYQGSS. The propeptide occupies 21–190; sequence IILESGNVND…KASDLNLNPD (170 aa). Q191 carries the pyrrolidone carboxylic acid modification. One can recognise a Peptidase M12B domain in the interval 197–393; the sequence is RYIELVVVAD…YKPQCILNKP (197 aa). E200 and D284 together coordinate Ca(2+). Disulfide bonds link C308-C388 and C348-C355. Residue H333 participates in Zn(2+) binding. E334 is an active-site residue. Zn(2+) contacts are provided by H337 and H343. Ca(2+)-binding residues include C388, N391, V403, N406, L408, E410, and E413. Residues 394–414 constitute a propeptide that is removed on maturation; sequence LRIDPVSTPVSGNELLEAGEE.

The protein belongs to the venom metalloproteinase (M12B) family. P-I subfamily. In terms of assembly, monomer. It depends on Zn(2+) as a cofactor. Post-translationally, the N-terminus is blocked. Expressed by the venom gland.

The protein localises to the secreted. It catalyses the reaction Cleavage of 5-His-|-Leu-6, 10-His-|-Leu-11, 14-Ala-|-Leu-15, 16-Tyr-|-Leu-17 and 23-Gly-|-Phe-24 of insulin B chain. Identical to the cleavage of insulin B chain by atrolysin C. Also cleaves Xaa-|-Ser bonds in glucagon.. In terms of biological role, snake venom metalloproteinase that impairs hemostasis in the envenomed animal. This is Snake venom metalloproteinase atrolysin-B from Crotalus atrox (Western diamondback rattlesnake).